Here is a 529-residue protein sequence, read N- to C-terminus: Peptide chain release factor 3 (529 aa).

The tr-type G domain occupies 11–280 (AKRRTFAIIS…GLVEWAPAPM (270 aa)). GTP contacts are provided by residues 20–27 (SHPDAGKT), 88–92 (DTPGH), and 142–145 (NKLD).

This sequence belongs to the TRAFAC class translation factor GTPase superfamily. Classic translation factor GTPase family. PrfC subfamily.

The protein resides in the cytoplasm. Functionally, increases the formation of ribosomal termination complexes and stimulates activities of RF-1 and RF-2. It binds guanine nucleotides and has strong preference for UGA stop codons. It may interact directly with the ribosome. The stimulation of RF-1 and RF-2 is significantly reduced by GTP and GDP, but not by GMP. This Escherichia coli O8 (strain IAI1) protein is Peptide chain release factor 3.